The primary structure comprises 87 residues: uncharacterized protein (87 aa).

This is an uncharacterized protein from Escherichia coli (Bacteriophage T4).